A 2560-amino-acid chain; its full sequence is Plipastatin synthase subunit B (2560 aa).

Residues 7 to 310 form a condensation 1 region; that stretch reads IQDIYPLSHM…NTVPVRIRSA (304 aa). Residues 7–1042 are domain 1 (tyrosine-activating); the sequence is IQDIYPLSHM…AVKLMSLKEH (1036 aa). Positions 496–889 are adenylation 1; it reads TYRQLQVRAN…QAPGVKEAAV (394 aa). The region spanning 965 to 1040 is the Carrier 1 domain; that stretch reads APRTLIEADL…SMAVKLMSLK (76 aa). Residue Ser1000 is modified to O-(pantetheine 4'-phosphoryl)serine. The tract at residues 1052 to 1342 is condensation 2; it reads QRDVYPLSFS…NTLAMRSKPE (291 aa). The tract at residues 1052–2553 is domain 2 (D-allo-threonine-activating); it reads QRDVYPLSFS…DLTLDELSEI (1502 aa). The interval 1527 to 1927 is adenylation 2; sequence TYRDLNEKAE…QYPMIKEAAV (401 aa). Residues 2006-2080 enclose the Carrier 2 domain; sequence SPRNEIETVM…ELSARVRKDV (75 aa). Ser2041 bears the O-(pantetheine 4'-phosphoryl)serine mark. The interval 2088–2553 is epimerization; that stretch reads VEGEITWTPI…DLTLDELSEI (466 aa).

Belongs to the ATP-dependent AMP-binding enzyme family. The cofactor is pantetheine 4'-phosphate.

Its function is as follows. This protein is a multifunctional enzyme, able to activate and polymerize the amino acids Tyr and Thr as part of the biosynthesis of the lipopeptide antibiotic plipastatin. The Thr residue is further converted to the D-allo-isomer form. The activation sites for these amino acids consist of individual domains. This is Plipastatin synthase subunit B (ppsB) from Bacillus subtilis (strain 168).